We begin with the raw amino-acid sequence, 195 residues long: Sec-independent protein translocase protein TatB (195 aa).

The helical transmembrane segment at 1 to 21 (MFDIGFSELVLIFIVGLVVLG) threads the bilayer. Residues 166–195 (DESQFAAYYPPDDDLASPTPSQPQDKQNVS) are disordered. The segment covering 183–195 (PTPSQPQDKQNVS) has biased composition (polar residues).

This sequence belongs to the TatB family. As to quaternary structure, the Tat system comprises two distinct complexes: a TatABC complex, containing multiple copies of TatA, TatB and TatC subunits, and a separate TatA complex, containing only TatA subunits. Substrates initially bind to the TatABC complex, which probably triggers association of the separate TatA complex to form the active translocon.

It localises to the cell inner membrane. Its function is as follows. Part of the twin-arginine translocation (Tat) system that transports large folded proteins containing a characteristic twin-arginine motif in their signal peptide across membranes. Together with TatC, TatB is part of a receptor directly interacting with Tat signal peptides. TatB may form an oligomeric binding site that transiently accommodates folded Tat precursor proteins before their translocation. This Actinobacillus pleuropneumoniae serotype 5b (strain L20) protein is Sec-independent protein translocase protein TatB.